A 157-amino-acid chain; its full sequence is Protein Smg (157 aa).

The protein belongs to the Smg family.

This is Protein Smg from Buchnera aphidicola subsp. Acyrthosiphon pisum (strain 5A).